Consider the following 468-residue polypeptide: Tissue alpha-L-fucosidase (468 aa).

The N-terminal stretch at 1 to 22 (MRSWVVGARLLLLLQLVLVLGA) is a signal peptide. At Thr173 the chain carries Phosphothreonine. Asn244, Asn271, and Asn320 each carry an N-linked (GlcNAc...) asparagine glycan.

The protein belongs to the glycosyl hydrolase 29 family. As to quaternary structure, homotetramer.

Its subcellular location is the lysosome. It catalyses the reaction an alpha-L-fucoside + H2O = L-fucose + an alcohol. The enzyme catalyses a neolactoside IV(2)-alpha-Fuc-nLc4Cer(d18:1(4E)) + H2O = a neolactoside nLc4Cer(d18:1(4E)) + L-fucose. It carries out the reaction a neolactoside IV(2)-alpha-Fuc-nLc4Cer(d18:0) + H2O = a neolactoside nLc4Cer(d18:0) + L-fucose. Alpha-L-fucosidase is responsible for hydrolyzing the alpha-1,6-linked fucose joined to the reducing-end N-acetylglucosamine of the carbohydrate moieties of glycoproteins. The sequence is that of Tissue alpha-L-fucosidase (FUCA1) from Bos taurus (Bovine).